Reading from the N-terminus, the 124-residue chain is UPF0738 protein GWCH70_0774 (124 aa).

Belongs to the UPF0738 family.

The protein is UPF0738 protein GWCH70_0774 of Geobacillus sp. (strain WCH70).